Reading from the N-terminus, the 460-residue chain is A-type ATP synthase subunit B 1 (460 aa).

This sequence belongs to the ATPase alpha/beta chains family. In terms of assembly, has multiple subunits with at least A(3), B(3), C, D, E, F, H, I and proteolipid K(x).

It localises to the cell membrane. Its function is as follows. Component of the A-type ATP synthase that produces ATP from ADP in the presence of a proton gradient across the membrane. The B chain is a regulatory subunit. The protein is A-type ATP synthase subunit B 1 of Methanospirillum hungatei JF-1 (strain ATCC 27890 / DSM 864 / NBRC 100397 / JF-1).